The chain runs to 284 residues: Halorhodopsin (284 aa).

Topologically, residues 1–30 are extracellular; sequence MIETAAADILAGGMVPLEMTQTQIFEAVQS. The chain crosses the membrane as a helical span at residues 31 to 56; the sequence is DTLLASSLWINIALAGLSILLFVYMG. The Cytoplasmic segment spans residues 57–62; the sequence is RNVEDP. A helical membrane pass occupies residues 63-86; sequence RAQLIFVATLMVPLVSISSYTGLV. Residues 87–110 are Extracellular-facing; the sequence is SGLTVSFLEMPAGHALAGQEVLTP. Residues 111–132 traverse the membrane as a helical segment; it reads WGRYLTWALSTPMILIAVGLLA. Topologically, residues 133–135 are cytoplasmic; the sequence is GSN. A helical transmembrane segment spans residues 136–159; the sequence is TTKLFTAVVADIGMCVTGLAAALT. Topologically, residues 160-162 are extracellular; the sequence is TSS. Residues 163–185 form a helical membrane-spanning segment; that stretch reads YLLRWVWYAISCAFFVVVLYILL. Over 186 to 197 the chain is Cytoplasmic; that stretch reads AEWAEDAEIAGT. A helical transmembrane segment spans residues 198 to 221; the sequence is ADIFNTLKVLTVVLWLGYPIFWAL. Topologically, residues 222 to 230 are extracellular; it reads GAEGLAVLD. Residues 231 to 259 traverse the membrane as a helical segment; sequence VAITSWAYSGMDIVAKYLFAFLLLRWVVN. Lys-246 is modified (N6-(retinylidene)lysine). Topologically, residues 260–284 are cytoplasmic; the sequence is NERTVADVASGLGSGSRGGAAPADD.

The protein belongs to the archaeal/bacterial/fungal opsin family.

Its subcellular location is the cell membrane. Functionally, light-driven chloride pump. The sequence is that of Halorhodopsin (hop) from Halobacterium sp. (strain SG1).